Reading from the N-terminus, the 487-residue chain is uncharacterized protein (487 aa).

The next 3 helical transmembrane spans lie at 10-30 (AALM…AADA), 45-65 (VISP…AVAA), and 439-459 (APVV…DFTL).

It localises to the cell membrane. This is an uncharacterized protein from Mycobacterium tuberculosis (strain CDC 1551 / Oshkosh).